Reading from the N-terminus, the 182-residue chain is Adenylate kinase (182 aa).

12–17 (GAGKGT) contributes to the ATP binding site. The tract at residues 32-61 (STGDLLRAEVKAGSELGKEAEAVMNRGELV) is NMP. Residues Thr-33, Arg-38, 59 to 61 (ELV), 85 to 88 (GFPR), and Gln-92 each bind AMP. The tract at residues 126 to 132 (ARGRADD) is LID. Arg-127 provides a ligand contact to ATP. 2 residues coordinate AMP: Arg-129 and Arg-140. Gly-168 serves as a coordination point for ATP.

Belongs to the adenylate kinase family. As to quaternary structure, monomer.

It localises to the cytoplasm. The catalysed reaction is AMP + ATP = 2 ADP. Its pathway is purine metabolism; AMP biosynthesis via salvage pathway; AMP from ADP: step 1/1. In terms of biological role, catalyzes the reversible transfer of the terminal phosphate group between ATP and AMP. Plays an important role in cellular energy homeostasis and in adenine nucleotide metabolism. In Synechococcus sp. (strain RCC307), this protein is Adenylate kinase.